A 207-amino-acid chain; its full sequence is Cytochrome c biogenesis ATP-binding export protein CcmA 1 (207 aa).

Positions 6 to 207 constitute an ABC transporter domain; that stretch reads LEALDLAGVR…KTSQTVRMGA (202 aa). 38 to 45 is a binding site for ATP; it reads GENGSGKT.

The protein belongs to the ABC transporter superfamily. CcmA exporter (TC 3.A.1.107) family. As to quaternary structure, the complex is composed of two ATP-binding proteins (CcmA) and two transmembrane proteins (CcmB).

The protein localises to the cell inner membrane. It carries out the reaction heme b(in) + ATP + H2O = heme b(out) + ADP + phosphate + H(+). In terms of biological role, part of the ABC transporter complex CcmAB involved in the biogenesis of c-type cytochromes; once thought to export heme, this seems not to be the case, but its exact role is uncertain. Responsible for energy coupling to the transport system. This is Cytochrome c biogenesis ATP-binding export protein CcmA 1 from Cupriavidus metallidurans (strain ATCC 43123 / DSM 2839 / NBRC 102507 / CH34) (Ralstonia metallidurans).